Reading from the N-terminus, the 97-residue chain is Na(+)/H(+) antiporter subunit F1 (97 aa).

3 helical membrane passes run 3–23 (HNVI…AMLI), 35–55 (VVAL…FSIL), and 60–80 (YMIV…AVFS).

The protein belongs to the CPA3 antiporters (TC 2.A.63) subunit F family. May form a heterooligomeric complex that consists of seven subunits: mnhA1, mnhB1, mnhC1, mnhD1, mnhE1, mnhF1 and mnhG1.

It localises to the cell membrane. In terms of biological role, mnh complex is a Na(+)/H(+) antiporter involved in Na(+) excretion. This is Na(+)/H(+) antiporter subunit F1 (mnhF1) from Staphylococcus aureus (strain Mu3 / ATCC 700698).